The chain runs to 90 residues: Small ribosomal subunit protein bS18 (90 aa).

It belongs to the bacterial ribosomal protein bS18 family. Part of the 30S ribosomal subunit. Forms a tight heterodimer with protein bS6.

Binds as a heterodimer with protein bS6 to the central domain of the 16S rRNA, where it helps stabilize the platform of the 30S subunit. In Bordetella avium (strain 197N), this protein is Small ribosomal subunit protein bS18.